The following is a 146-amino-acid chain: ATP synthase epsilon chain (146 aa).

Belongs to the ATPase epsilon chain family. As to quaternary structure, F-type ATPases have 2 components, CF(1) - the catalytic core - and CF(0) - the membrane proton channel. CF(1) has five subunits: alpha(3), beta(3), gamma(1), delta(1), epsilon(1). CF(0) has three main subunits: a, b and c.

It localises to the cell inner membrane. Produces ATP from ADP in the presence of a proton gradient across the membrane. The protein is ATP synthase epsilon chain of Rhodospirillum centenum (strain ATCC 51521 / SW).